The sequence spans 348 residues: DNA ligase C1 (348 aa).

The N6-AMP-lysine intermediate role is filled by Lys32.

It belongs to the ATP-dependent DNA ligase family. A divalent metal cation is required as a cofactor.

The catalysed reaction is ATP + (deoxyribonucleotide)n-3'-hydroxyl + 5'-phospho-(deoxyribonucleotide)m = (deoxyribonucleotide)n+m + AMP + diphosphate.. DNA ligase that seals nicks in double-stranded DNA during DNA replication, DNA recombination and DNA repair. Has weak intrinsic nick joining activities and accumulates DNA-adenylate. Acts as a backup for LigD in the Ku-LigD-dependent NHEJ pathway. The polypeptide is DNA ligase C1 (ligC) (Mycolicibacterium smegmatis (strain ATCC 700084 / mc(2)155) (Mycobacterium smegmatis)).